We begin with the raw amino-acid sequence, 302 residues long: Sulfate adenylyltransferase subunit 2 (302 aa).

The protein belongs to the PAPS reductase family. CysD subfamily. In terms of assembly, heterodimer composed of CysD, the smaller subunit, and CysN.

The enzyme catalyses sulfate + ATP + H(+) = adenosine 5'-phosphosulfate + diphosphate. It functions in the pathway sulfur metabolism; hydrogen sulfide biosynthesis; sulfite from sulfate: step 1/3. Functionally, with CysN forms the ATP sulfurylase (ATPS) that catalyzes the adenylation of sulfate producing adenosine 5'-phosphosulfate (APS) and diphosphate, the first enzymatic step in sulfur assimilation pathway. APS synthesis involves the formation of a high-energy phosphoric-sulfuric acid anhydride bond driven by GTP hydrolysis by CysN coupled to ATP hydrolysis by CysD. This Klebsiella pneumoniae (strain 342) protein is Sulfate adenylyltransferase subunit 2.